The primary structure comprises 880 residues: Valine--tRNA ligase (880 aa).

The short motif at 49-59 is the 'HIGH' region element; the sequence is PNVTGKLHLGH. Residues 525–529 carry the 'KMSKS' region motif; it reads KMSKS. K528 provides a ligand contact to ATP. A coiled-coil region spans residues 809-880; it reads LEGLINIEEE…VKARLAELKR (72 aa).

It belongs to the class-I aminoacyl-tRNA synthetase family. ValS type 1 subfamily. Monomer.

Its subcellular location is the cytoplasm. The enzyme catalyses tRNA(Val) + L-valine + ATP = L-valyl-tRNA(Val) + AMP + diphosphate. Functionally, catalyzes the attachment of valine to tRNA(Val). As ValRS can inadvertently accommodate and process structurally similar amino acids such as threonine, to avoid such errors, it has a 'posttransfer' editing activity that hydrolyzes mischarged Thr-tRNA(Val) in a tRNA-dependent manner. The polypeptide is Valine--tRNA ligase (valS) (Geobacillus stearothermophilus (Bacillus stearothermophilus)).